The chain runs to 109 residues: Biphenyl dioxygenase ferredoxin subunit (109 aa).

The Rieske domain maps to threonine 4–valine 100. [2Fe-2S] cluster-binding residues include cysteine 43, histidine 45, cysteine 63, and histidine 66.

Belongs to the bacterial ring-hydroxylating dioxygenase ferredoxin component family. This dioxygenase system consists of four proteins: the two subunits of the hydroxylase component (BphA1 and BphA2), a ferredoxin (BphA3) and a ferredoxin reductase (BphA4).

Its function is as follows. This protein seems to be a 2Fe-2S ferredoxin. The sequence is that of Biphenyl dioxygenase ferredoxin subunit (bphA3) from Pseudomonas sp. (strain KKS102).